The primary structure comprises 193 residues: dTTP/UTP pyrophosphatase (193 aa).

Residue Asp-77 is the Proton acceptor of the active site.

The protein belongs to the Maf family. YhdE subfamily. Requires a divalent metal cation as cofactor.

Its subcellular location is the cytoplasm. The catalysed reaction is dTTP + H2O = dTMP + diphosphate + H(+). It catalyses the reaction UTP + H2O = UMP + diphosphate + H(+). Its function is as follows. Nucleoside triphosphate pyrophosphatase that hydrolyzes dTTP and UTP. May have a dual role in cell division arrest and in preventing the incorporation of modified nucleotides into cellular nucleic acids. This chain is dTTP/UTP pyrophosphatase, found in Bacteroides thetaiotaomicron (strain ATCC 29148 / DSM 2079 / JCM 5827 / CCUG 10774 / NCTC 10582 / VPI-5482 / E50).